The primary structure comprises 332 residues: RNA polymerase sigma-B factor (332 aa).

Positions 125–138 (DLIQEGALGLERGV) match the Polymerase core binding motif. Positions 294-313 (LVQISQRMGISRERVRQVEK) form a DNA-binding region, H-T-H motif.

This sequence belongs to the sigma-70 factor family.

Its function is as follows. Sigma factors are initiation factors that promote the attachment of RNA polymerase to specific initiation sites and are then released. In Nostoc sp. (strain PCC 7120 / SAG 25.82 / UTEX 2576), this protein is RNA polymerase sigma-B factor (sigB).